Reading from the N-terminus, the 801-residue chain is MEALSHVGIGLSPFQLCRLPPATTKLRRSHNTSTTICSASKWADRLLSDFNFTSDSSSSSFATATTTATLVSPPPSIDRPERHVPIPIDFYQVLGAQTHFLTDGIRRAFEARVSKPPQFGFSDDALISRRQILQAACETLSNPRSRREYNEGLLDDEEATVITDVPWDKVPGALCVLQEGGETEIVLRVGEALLKERLPKSFKQDVVLVMALAFLDVSRDAMALDPPDFITGYEFVEEALKLLQEEGASSLAPDLRAQIDETLEEITPRYVLELLGLPLGDDYAAKRLNGLSGVRNILWSVGGGGASALVGGLTREKFMNEAFLRMTAAEQVDLFVATPSNIPAESFEVYEVALALVAQAFIGKKPHLLQDADKQFQQLQQAKVMAMEIPAMLYDTRNNWEIDFGLERGLCALLIGKVDECRMWLGLDSEDSQYRNPAIVEFVLENSNRDDNDDLPGLCKLLETWLAGVVFPRFRDTKDKKFKLGDYYDDPMVLSYLERVEVVQGSPLAAAAAMARIGAEHVKASAMQALQKVFPSRYTDRNSAEPKDVQETVFSVDPVGNNVGRDGEPGVFIAEAVRPSENFETNDYAIRAGVSESSVDETTVEMSVADMLKEASVKILAAGVAIGLISLFSQKYFLKSSSSFQRKDMVSSMESDVATIGSVRADDSEALPRMDARTAENIVSKWQKIKSLAFGPDHRIEMLPEVLDGRMLKIWTDRAAETAQLGLVYDYTLLKLSVDSVTVSADGTRALVEATLEESACLSDLVHPENNATDVRTYTTRYEVFWSKSGWKITEGSVLAS.

The transit peptide at 1–67 (MEALSHVGIG…SSSFATATTT (67 aa)) directs the protein to the chloroplast. The Stromal segment spans residues 68–618 (ATLVSPPPSI…ADMLKEASVK (551 aa)). One can recognise a J domain in the interval 89–153 (DFYQVLGAQT…RSRREYNEGL (65 aa)). Residues 619 to 638 (ILAAGVAIGLISLFSQKYFL) traverse the membrane as a helical segment. Over 639–801 (KSSSSFQRKD…KITEGSVLAS (163 aa)) the chain is Chloroplast intermembrane. The segment at 639–801 (KSSSSFQRKD…KITEGSVLAS (163 aa)) is interaction with PDV2.

In terms of assembly, self-interacts. Part of a complex made of ARC3, ARC6, FTSZ1 and FTSZ2. Interacts with FTSZ2-1 and FTSZ2-2 (via C-terminus), but not with FTSZ1; this interaction enables ARC3 binding to FTSZ2. Binds to CDT1A. Interacts (via C-terminus) with PDV2 (via C-terminus) in the chloroplast intermembrane space; this interaction induces homodimerization and leads to the formation of a heterotetramer containing two ARC6 and two PDV2 subunits. Interacts with MCD1 in the chloroplast stroma and facilitates its subsequent binding to FtsZ2-1. Interacts (via J domain) with CJD1 (via J-like domain). As to expression, mostly expressed in young leaves.

It localises to the plastid. The protein resides in the chloroplast inner membrane. Component of the plastid division machinery consisting in a binary fission accomplished by the simultaneous constriction of the FtsZ ring on the stromal side of the inner envelope membrane, and the ARC5 ring on the cytosolic side of the outer envelope membrane. Involved in the initiation of proplastid and plastid division (including chloroplasts, statoliths and leukoplasts). Promotes the assembly and/or stabilization of the plastid-dividing FtsZ ring, functioning as an antagonistic regulator of FtsZ dynamics against CDP1 and facilitating MCD1 positioning to membrane tethered FtsZ filaments to form the chloroplast Z-Ring; inhibits GDP-induced disassembly of FTSZ2 but enables ARC3 binding to FTSZ2-1. Relays plastid division site position between stroma and outer surface via interactions with the stromal FtsZ ring and the outer membrane PDV2 that recruits cytoplasmic ARC5 ring. Required for plastid equatorial positioning of PDV2 and ARC5. May contribute to gravitropism in stems and hypocotyls. Seems to influence stromule (stroma-filled tubular extensions of the plastid envelope membrane) length and frequency. The sequence is that of Protein ACCUMULATION AND REPLICATION OF CHLOROPLASTS 6, chloroplastic from Arabidopsis thaliana (Mouse-ear cress).